Consider the following 667-residue polypeptide: MIASCLYYLLLPAARLFRFLSDAFFTCRKNALLAKSSSPQVEGNFAMAPRGPDQEECEGLLQQWREEGWNQTPSTASEGPLADKGLAESSLALLMDNSGEQDAASEDKWSSRQLSDLRAAENLNQPFPEVLGEEPLAEVEGPLWAAVPVQTGPQYADCAVLPMGAMAAEQWEEDPAMVAWSIAPEPMPQEETSMWPFEGLEQLQPPPMEIPYHEILWREWEDFSTQPDAQGLEAGDGPQFQFTLMSYNILAQDLMQQSSELYLHCHPDILNWNYRFANLMQEFQHWDPDILCLQEVQEDHYWEQLEPSLRMMGFTCFYKRRTGCKTDGCAVCYKPTRFRLLCASPVEYFRPGLELLNRDNVGLVLLLQPLVPEGLGQVSVAPLCVANTHVLYNPRRGDVKLAQMAILLAEVDKVARLSDGSHCPIILCGDLNSVPDSPLYNFIRDGELQYNGMPAWKVSGQEDFSHQLYQRKLQAPLWPSSLGITDCCQYVTSCHPKRSERLKYGRDFLLRFRFCDLACQRPVGLVLMEGVTDTKPDRPAGWAECIFEEEISELEPVFPRTIGTIQHCLHLTSVYTHFLPQHGCPEVTTMPLGLGMTVDYIFFSAESCENENRTDHRLDRDGTLKLLGRLSLLSEEILWAANGLPNPFYSSDHLCLLASFGMEVTAP.

Phosphoserine occurs at positions 77 and 105.

It belongs to the CCR4/nocturin family.

The polypeptide is Protein angel homolog 1 (Mus musculus (Mouse)).